Here is a 258-residue protein sequence, read N- to C-terminus: Imidazole glycerol phosphate synthase subunit HisF (258 aa).

Active-site residues include aspartate 11 and aspartate 130.

The protein belongs to the HisA/HisF family. As to quaternary structure, heterodimer of HisH and HisF.

Its subcellular location is the cytoplasm. It catalyses the reaction 5-[(5-phospho-1-deoxy-D-ribulos-1-ylimino)methylamino]-1-(5-phospho-beta-D-ribosyl)imidazole-4-carboxamide + L-glutamine = D-erythro-1-(imidazol-4-yl)glycerol 3-phosphate + 5-amino-1-(5-phospho-beta-D-ribosyl)imidazole-4-carboxamide + L-glutamate + H(+). It functions in the pathway amino-acid biosynthesis; L-histidine biosynthesis; L-histidine from 5-phospho-alpha-D-ribose 1-diphosphate: step 5/9. In terms of biological role, IGPS catalyzes the conversion of PRFAR and glutamine to IGP, AICAR and glutamate. The HisF subunit catalyzes the cyclization activity that produces IGP and AICAR from PRFAR using the ammonia provided by the HisH subunit. This is Imidazole glycerol phosphate synthase subunit HisF from Escherichia coli O17:K52:H18 (strain UMN026 / ExPEC).